The primary structure comprises 106 residues: ATP-dependent Clp protease adapter protein ClpS (106 aa).

Positions 1 to 10 (MSQKTVHDQD) are enriched in basic and acidic residues. The disordered stretch occupies residues 1–23 (MSQKTVHDQDNALLLETGNTKVA).

Belongs to the ClpS family. As to quaternary structure, binds to the N-terminal domain of the chaperone ClpA.

In terms of biological role, involved in the modulation of the specificity of the ClpAP-mediated ATP-dependent protein degradation. This is ATP-dependent Clp protease adapter protein ClpS from Xylella fastidiosa (strain M23).